The primary structure comprises 426 residues: Protein TolB homolog (426 aa).

An N-terminal signal peptide occupies residues Met1–Cys19.

This sequence belongs to the TolB family.

The protein localises to the periplasm. In Chlamydia muridarum (strain MoPn / Nigg), this protein is Protein TolB homolog.